A 1035-amino-acid polypeptide reads, in one-letter code: Potassium-transporting ATPase alpha chain 1 (1035 aa).

Positions 1–41 (MGKAENYELYSVELGPGPGGDMAAKMSKKKKAGGGGGKRKE) are disordered. Residues 1 to 98 (MGKAENYELY…NALRPPRGTP (98 aa)) lie on the Cytoplasmic side of the membrane. Tyr7 and Tyr10 each carry phosphotyrosine. The segment covering 26-40 (MSKKKKAGGGGGKRK) has biased composition (basic residues). At Ser27 the chain carries Phosphoserine. A helical membrane pass occupies residues 99–119 (EYVKFARQLAGGLQCLMWVAA). The Lumenal segment spans residues 120-142 (AICLIAFAIQASEGDLTTDDNLY). A helical transmembrane segment spans residues 143–163 (LAIALIAVVVVTGCFGYYQEF). Topologically, residues 164–299 (KSTNIIASFK…NEKTPIAIEI (136 aa)) are cytoplasmic. Residues 300-319 (EHFVDIIAGLAILFGATFFI) form a helical membrane-spanning segment. Topologically, residues 320 to 331 (VAMCIGYTFLRA) are lumenal. Residues 332 to 349 (MVFFMAIVVAYVPEGLLA) form a helical membrane-spanning segment. Residues Val340, Ala341, Val343, and Glu345 each coordinate K(+). The Cytoplasmic portion of the chain corresponds to 350-783 (TVTVCLSLTA…EQGRLIFDNL (434 aa)). Asp387 acts as the 4-aspartylphosphate intermediate in catalysis. Positions 387 and 389 each coordinate Mg(2+). Ser463 and Ser601 each carry phosphoserine. Mg(2+)-binding residues include Asp728 and Asp732. The helical transmembrane segment at 784-803 (KKSIAYTLTKNIPELTPYLI) threads the bilayer. Residue Glu797 participates in K(+) binding. At 804-813 (YITVSVPLPL) the chain is on the lumenal side. The chain crosses the membrane as a helical span at residues 814 to 834 (GCITILFIELCTDIFPSVSLA). Glu822 contributes to the K(+) binding site. Residues 835-854 (YEKAESDIMHLRPRNPKRDR) lie on the Cytoplasmic side of the membrane. At Ser840 the chain carries Phosphoserine. A helical transmembrane segment spans residues 855-877 (LVNEPLAAYSYFQIGAIQSFAGF). The Lumenal portion of the chain corresponds to 878 to 929 (TDYFTAMAQEGWFPLLCVGLRAQWEDHHLQDLQDSYGQEWTFGQRLYQQYTC). The helical transmembrane segment at 930 to 949 (YTVFFISIEVCQIADVLIRK) threads the bilayer. The Cytoplasmic segment spans residues 950–963 (TRRLSAFQQGFFRN). At Ser954 the chain carries Phosphoserine; by PKA. Residues 964–982 (KILVIAIVFQVCIGCFLCY) form a helical membrane-spanning segment. The Lumenal segment spans residues 983–997 (CPGMPNIFNFMPIRF). Residues 998–1018 (QWWLVPLPYGILIFVYDEIRK) traverse the membrane as a helical segment. At 1019–1035 (LGVRCCPGSWWDQELYY) the chain is on the cytoplasmic side.

Belongs to the cation transport ATPase (P-type) (TC 3.A.3) family. Type IIC subfamily. As to quaternary structure, the gastric H(+)/K(+) ATPase pump is composed of the catalytic alpha subunit ATP4A and the regulatory beta subunit ATP4B. Interacts (via the P-domain) with ATP4B (via N-terminus); this interaction stabilizes the lumenal-open E2 conformation state and prevents the reverse reaction of the transport cycle. As to expression, expressed in gastric parietal cells (at protein level).

The protein resides in the apical cell membrane. The enzyme catalyses K(+)(out) + ATP + H2O + H(+)(in) = K(+)(in) + ADP + phosphate + 2 H(+)(out). The catalytic subunit of the gastric H(+)/K(+) ATPase pump which transports H(+) ions in exchange for K(+) ions across the apical membrane of parietal cells. Uses ATP as an energy source to pump H(+) ions to the gastric lumen while transporting K(+) ion from the lumen into the cell. Remarkably generates a million-fold proton gradient across the gastric parietal cell membrane, acidifying the gastric juice down to pH 1. Within a transport cycle, the transfer of a H(+) ion across the membrane is coupled to ATP hydrolysis and is associated with a transient phosphorylation that shifts the pump conformation from inward-facing (E1) to outward-facing state (E2). The release of the H(+) ion in the stomach lumen is followed by binding of K(+) ion converting the pump conformation back to the E1 state. In Homo sapiens (Human), this protein is Potassium-transporting ATPase alpha chain 1.